The sequence spans 338 residues: UDP-N-acetylenolpyruvoylglucosamine reductase (338 aa).

One can recognise an FAD-binding PCMH-type domain in the interval 17 to 188 (IAARTDWWID…MYVDYRLRLR (172 aa)). Residue Arg-164 is part of the active site. The Proton donor role is filled by Ser-237. The active site involves Glu-333.

The protein belongs to the MurB family. It depends on FAD as a cofactor.

The protein localises to the cytoplasm. It catalyses the reaction UDP-N-acetyl-alpha-D-muramate + NADP(+) = UDP-N-acetyl-3-O-(1-carboxyvinyl)-alpha-D-glucosamine + NADPH + H(+). The protein operates within cell wall biogenesis; peptidoglycan biosynthesis. Functionally, cell wall formation. The sequence is that of UDP-N-acetylenolpyruvoylglucosamine reductase from Porphyromonas gingivalis (strain ATCC 33277 / DSM 20709 / CIP 103683 / JCM 12257 / NCTC 11834 / 2561).